We begin with the raw amino-acid sequence, 385 residues long: MKTELDLHDRSLTLHRFPKRSNETLQAWDAGDEYLINNVEGMALPDNQNIVVVNDNFGALACWFSDRHNVTLMSDSFISHKGAQQNLADNQCNQVSFLSTMDDIPENTDLVLMQLPKSNRHLVWLLSQLRKTLPASCPIVAVNKAKEIHTSTLKLFEKYLGETKTSLAWKKHRLVFSTANAQPVIDVDPMTIWGIEGEGIQLKNLPNVYSGESLDLGARFMLQHLPQDPTLKHVIDLGCGNGLLSVKMGQLNPQARLTSVDESFMAVESAKQNLLDNLGDARDIQCIANNCLDGFTPDCADMVMCNPPFHQQQAITDHIAWQMFCDAKQILNQGGKLLVIGNRHLGYDAKLKRLFGDKNVKLVASNNKFVILQATKNPAKLGAKQ.

Belongs to the methyltransferase superfamily. RlmG family.

It localises to the cytoplasm. The enzyme catalyses guanosine(1835) in 23S rRNA + S-adenosyl-L-methionine = N(2)-methylguanosine(1835) in 23S rRNA + S-adenosyl-L-homocysteine + H(+). Its function is as follows. Specifically methylates the guanine in position 1835 (m2G1835) of 23S rRNA. In Vibrio campbellii (strain ATCC BAA-1116), this protein is Ribosomal RNA large subunit methyltransferase G.